A 338-amino-acid chain; its full sequence is GTPase Obg (338 aa).

Residues methionine 1–isoleucine 159 form the Obg domain. An OBG-type G domain is found at alanine 160–lysine 333. GTP is bound by residues glycine 166–serine 173, phenylalanine 191–lysine 195, aspartate 213–glycine 216, asparagine 283–aspartate 286, and serine 314–isoleucine 316. Mg(2+) is bound by residues serine 173 and threonine 193.

This sequence belongs to the TRAFAC class OBG-HflX-like GTPase superfamily. OBG GTPase family. Monomer. It depends on Mg(2+) as a cofactor.

Its subcellular location is the cytoplasm. In terms of biological role, an essential GTPase which binds GTP, GDP and possibly (p)ppGpp with moderate affinity, with high nucleotide exchange rates and a fairly low GTP hydrolysis rate. Plays a role in control of the cell cycle, stress response, ribosome biogenesis and in those bacteria that undergo differentiation, in morphogenesis control. This chain is GTPase Obg, found in Buchnera aphidicola subsp. Baizongia pistaciae (strain Bp).